The chain runs to 693 residues: ATP-dependent DNA helicase RecG (693 aa).

Residues T48–E146 are wedge domain. Positions D283–I448 constitute a Helicase ATP-binding domain. Position 296–303 (G296–T303) interacts with ATP. The DEAH box signature appears at D397–H400. The Helicase C-terminal domain occupies E482–E628.

Belongs to the helicase family. RecG subfamily. In terms of assembly, monomer.

The enzyme catalyses Couples ATP hydrolysis with the unwinding of duplex DNA by translocating in the 3'-5' direction.. It catalyses the reaction ATP + H2O = ADP + phosphate + H(+). Functionally, plays a critical role in recombination and DNA repair. Helps process Holliday junction intermediates to mature products by catalyzing branch migration. Has replication fork regression activity, unwinds stalled or blocked replication forks to make a HJ that can be resolved. Has a DNA unwinding activity characteristic of a DNA helicase with 3'-5' polarity. Plays a role in recovery after DNA ADP-ribosylation. The sequence is that of ATP-dependent DNA helicase RecG from Escherichia coli O127:H6 (strain E2348/69 / EPEC).